A 696-amino-acid polypeptide reads, in one-letter code: Golgi integral membrane protein 4 (696 aa).

G2 carries N-myristoyl glycine lipidation. Residues 2-12 (GNGMCSRKQKR) are Cytoplasmic-facing. A helical; Signal-anchor for type II membrane protein membrane pass occupies residues 13-33 (IFQTLLLLTVVFGFLYGAMLY). The Lumenal segment spans residues 34–696 (YELQTQLRKA…AEKSHRRAEM (663 aa)). Residues 35 to 244 (ELQTQLRKAE…KQLKDTLNRI (210 aa)) adopt a coiled-coil conformation. A golgi targeting region spans residues 38 to 107 (TQLRKAEAVA…ETLNKGRQDS (70 aa)). An endosome targeting region spans residues 80–175 (LEHKKAKEDF…QELSKLKETV (96 aa)). Disordered regions lie at residues 122 to 145 (KSQH…QGED), 244 to 391 (IPSL…HARA), and 427 to 696 (LREH…RAEM). Residues 123–145 (SQHEELKKQHSDLEEEHRKQGED) show a composition bias toward basic and acidic residues. Residues 176-248 (YNLREENRQL…DTLNRIPSLR (73 aa)) form a golgi targeting region. The segment covering 254–269 (EQQNVTQVAHSPQGYN) has biased composition (polar residues). N257 carries N-linked (GlcNAc...) asparagine glycosylation. Basic and acidic residues-rich tracts occupy residues 271-281 (AREKPTREVQE), 298-313 (RAED…KEAE), 324-343 (EVER…RKAL), 355-364 (EHLEEEHDPS), and 370-380 (REWKEQHEQRE). At S364 the chain carries Phosphoserine. The span at 436-453 (QQRLQGHLLRQQEQQQQQ) shows a compositional bias: low complexity. Composition is skewed to basic and acidic residues over residues 464 to 476 (AELE…HQEQ) and 505 to 545 (AYER…RAAV). S538 bears the Phosphoserine mark. Residues 604-626 (QQEDNVDEQYQEEAEEEVQEDLT) show a composition bias toward acidic residues. A Phosphotyrosine modification is found at Y613. Position 626 is a phosphothreonine (T626). 2 stretches are compositionally biased toward basic and acidic residues: residues 627–638 (EEKKRELEHNAE) and 661–672 (RDDNRPKGREEH). At Y673 the chain carries Phosphotyrosine. The segment covering 673–683 (YEEEEEEEEDG) has biased composition (acidic residues).

This sequence belongs to the GOLIM4 family. Phosphorylated probably by c-AMP-dependent kinases in its lumenal part. In terms of processing, O-glycosylated; modified by sialic acid residues. Post-translationally, N-glycosylated; N-glycans are probably of the complex type and modified by sialic acid residues.

The protein localises to the golgi apparatus. It is found in the golgi stack membrane. It localises to the endosome membrane. Its subcellular location is the membrane. Functionally, plays a role in endosome to Golgi protein trafficking; mediates protein transport along the late endosome-bypass pathway from the early endosome to the Golgi. This is Golgi integral membrane protein 4 (GOLIM4) from Homo sapiens (Human).